Reading from the N-terminus, the 314-residue chain is tRNA pseudouridine synthase B (314 aa).

D54 acts as the Nucleophile in catalysis.

It belongs to the pseudouridine synthase TruB family. Type 1 subfamily.

The catalysed reaction is uridine(55) in tRNA = pseudouridine(55) in tRNA. Responsible for synthesis of pseudouridine from uracil-55 in the psi GC loop of transfer RNAs. The protein is tRNA pseudouridine synthase B of Ralstonia nicotianae (strain ATCC BAA-1114 / GMI1000) (Ralstonia solanacearum).